The primary structure comprises 202 residues: Small ribosomal subunit protein uS5 (202 aa).

Residues 42–105 (LKDEVLKIMP…ILAKLSIVPV (64 aa)) enclose the S5 DRBM domain. Threonine 192 bears the Phosphothreonine mark.

The protein belongs to the universal ribosomal protein uS5 family. In terms of assembly, component of the small ribosomal subunit. Interacts with zinc finger protein ZNF277 (via zinc-finger domains); the interaction is direct; the interaction is extra-ribosomal. Interaction with ZNF277 competes with the binding of RPS2 to protein arginine methyltransferase PRMT3. Citrullinated by PADI4 in the Arg/Gly-rich region. Post-translationally, asymmetric arginine dimethylation by PRMT3 occurs at multiple sites in the Arg/Gly-rich region. In terms of processing, monoubiquitinated by RNF10 when a ribosome has stalled during translation, leading to its degradation by the proteasome. Deubiquitinated by USP10, preventing degradation by the proteasome and promoting 40S ribosome subunit recycling following ribosome dissociation.

It is found in the cytoplasm. It localises to the nucleus. The protein localises to the nucleolus. In terms of biological role, component of the ribosome, a large ribonucleoprotein complex responsible for the synthesis of proteins in the cell. The small ribosomal subunit (SSU) binds messenger RNAs (mRNAs) and translates the encoded message by selecting cognate aminoacyl-transfer RNA (tRNA) molecules. The large subunit (LSU) contains the ribosomal catalytic site termed the peptidyl transferase center (PTC), which catalyzes the formation of peptide bonds, thereby polymerizing the amino acids delivered by tRNAs into a polypeptide chain. The nascent polypeptides leave the ribosome through a tunnel in the LSU and interact with protein factors that function in enzymatic processing, targeting, and the membrane insertion of nascent chains at the exit of the ribosomal tunnel. Plays a role in the assembly and function of the 40S ribosomal subunit. Mutations in this protein affects the control of translational fidelity. Involved in nucleolar processing of pre-18S ribosomal RNA and ribosome assembly. In Cricetulus griseus (Chinese hamster), this protein is Small ribosomal subunit protein uS5 (RPS2).